The following is a 226-amino-acid chain: Late protein I226R (226 aa).

Positions 1–16 (MKMETFLVCLFHNADG) are cleaved as a signal peptide. N142 and N164 each carry an N-linked (GlcNAc...) asparagine; by host glycan.

This sequence belongs to the asfivirus I226R family.

Its function is as follows. Plays a role in the inhibition of host NF-kappa-B and IRF3 signaling pathways. Mechanistically, promotes the degradation of host IKBKG through enhancing its ubiquitination leading to inhibition of both pathways. This African swine fever virus (isolate Tick/South Africa/Pretoriuskop Pr4/1996) (ASFV) protein is Late protein I226R.